The primary structure comprises 265 residues: Glutamate racemase (265 aa).

Substrate is bound by residues 12-13 (DS) and 44-45 (YG). The active-site Proton donor/acceptor is the cysteine 75. 76-77 (NT) contributes to the substrate binding site. Cysteine 186 (proton donor/acceptor) is an active-site residue. Residue 187–188 (TH) participates in substrate binding.

The protein belongs to the aspartate/glutamate racemases family.

The enzyme catalyses L-glutamate = D-glutamate. It functions in the pathway cell wall biogenesis; peptidoglycan biosynthesis. Functionally, provides the (R)-glutamate required for cell wall biosynthesis. This is Glutamate racemase from Pseudomonas putida (strain ATCC 700007 / DSM 6899 / JCM 31910 / BCRC 17059 / LMG 24140 / F1).